We begin with the raw amino-acid sequence, 62 residues long: MLCLPVFIILLLLASPAAPNPLERRIQSDLIRAALEDADMKTEKGILSSIMGTLGKIVGLAP.

The signal sequence occupies residues 1–19; that stretch reads MLCLPVFIILLLLASPAAP. The propeptide occupies 20–54; the sequence is NPLERRIQSDLIRAALEDADMKTEKGILSSIMGTL.

The protein belongs to the conotoxin T superfamily. Expressed by the venom duct.

The protein resides in the secreted. The polypeptide is Conotoxin TsMLCL-02 (Conus tessulatus (Tessellate cone)).